The primary structure comprises 250 residues: Probable transcriptional regulatory protein Ppha_0657 (250 aa).

This sequence belongs to the TACO1 family.

Its subcellular location is the cytoplasm. The sequence is that of Probable transcriptional regulatory protein Ppha_0657 from Pelodictyon phaeoclathratiforme (strain DSM 5477 / BU-1).